The primary structure comprises 134 residues: L-ectoine synthase (134 aa).

This sequence belongs to the ectoine synthase family.

The enzyme catalyses (2S)-4-acetamido-2-aminobutanoate = L-ectoine + H2O. It participates in amine and polyamine biosynthesis; ectoine biosynthesis; L-ectoine from L-aspartate 4-semialdehyde: step 3/3. In terms of biological role, catalyzes the circularization of gamma-N-acetyl-alpha,gamma-diaminobutyric acid (ADABA) to ectoine (1,4,5,6-tetrahydro-2-methyl-4-pyrimidine carboxylic acid), which is an excellent osmoprotectant. This chain is L-ectoine synthase (ectC), found in Sporosarcina pasteurii (Bacillus pasteurii).